A 244-amino-acid chain; its full sequence is Precorrin-6A reductase (244 aa).

Belongs to the precorrin-6x reductase family.

The catalysed reaction is precorrin-6B + NADP(+) = precorrin-6A + NADPH + 2 H(+). The protein operates within cofactor biosynthesis; adenosylcobalamin biosynthesis; cob(II)yrinate a,c-diamide from precorrin-2 (aerobic route): step 6/10. Catalyzes the reduction of the macrocycle of precorrin-6X into precorrin-6Y. The sequence is that of Precorrin-6A reductase (cobK) from Mycobacterium tuberculosis (strain CDC 1551 / Oshkosh).